A 211-amino-acid chain; its full sequence is 3-demethoxyubiquinol 3-hydroxylase (211 aa).

Fe cation-binding residues include Glu60, Glu90, His93, Glu142, Glu174, and His177.

It belongs to the COQ7 family. It depends on Fe cation as a cofactor.

The protein localises to the cell membrane. The enzyme catalyses a 5-methoxy-2-methyl-3-(all-trans-polyprenyl)benzene-1,4-diol + AH2 + O2 = a 3-demethylubiquinol + A + H2O. The protein operates within cofactor biosynthesis; ubiquinone biosynthesis. Functionally, catalyzes the hydroxylation of 2-nonaprenyl-3-methyl-6-methoxy-1,4-benzoquinol during ubiquinone biosynthesis. This is 3-demethoxyubiquinol 3-hydroxylase from Herminiimonas arsenicoxydans.